Reading from the N-terminus, the 209-residue chain is Kynurenine formamidase (209 aa).

F19 is a binding site for substrate. Residues H49, H53, and D55 each coordinate Zn(2+). H59 acts as the Proton donor/acceptor in catalysis. Positions 160 and 172 each coordinate Zn(2+).

This sequence belongs to the Cyclase 1 superfamily. KynB family. In terms of assembly, homodimer. Zn(2+) serves as cofactor.

It catalyses the reaction N-formyl-L-kynurenine + H2O = L-kynurenine + formate + H(+). The protein operates within amino-acid degradation; L-tryptophan degradation via kynurenine pathway; L-kynurenine from L-tryptophan: step 2/2. Catalyzes the hydrolysis of N-formyl-L-kynurenine to L-kynurenine, the second step in the kynurenine pathway of tryptophan degradation. This Delftia acidovorans (strain DSM 14801 / SPH-1) protein is Kynurenine formamidase.